We begin with the raw amino-acid sequence, 346 residues long: Protein RecA (346 aa).

79–86 (GPESSGKT) lines the ATP pocket.

The protein belongs to the RecA family.

The protein localises to the cytoplasm. Can catalyze the hydrolysis of ATP in the presence of single-stranded DNA, the ATP-dependent uptake of single-stranded DNA by duplex DNA, and the ATP-dependent hybridization of homologous single-stranded DNAs. It interacts with LexA causing its activation and leading to its autocatalytic cleavage. This is Protein RecA from Chlorobaculum tepidum (strain ATCC 49652 / DSM 12025 / NBRC 103806 / TLS) (Chlorobium tepidum).